A 326-amino-acid chain; its full sequence is MNIDCLCRWVVLPLLRYPLLVALVLRWSLSDSISICLTIYTLLINAFLIANSYIKRSGQVAWKSLREFKNGIVLITGGSKGLGRAIVSQLLQDYSNLTILNVDICPSSVRNTRVKDLICDLSDDEEVAALLNLLKRKYKNEIRLIVNNAGVRANFTGFNGMERDNLDKIFKINTFAPLQFIQELAPSRHSTRQCYIVNIASILGILTPAKVAAYAASKAALIAFHQSYSFELQNEGVRNIRTLLVTPGQLNTEMFAGFKPPRQFFAPVIDITTLAAKIVRYCELGQRGQLNEPFYCSFAHLLMCVPYSLQRIVRSFSRIDCCLPDE.

The next 2 membrane-spanning stretches (helical) occupy residues 9–29 (WVVLPLLRYPLLVALVLRWSL) and 33–53 (ISICLTIYTLLINAFLIANSY). Residues Asp-120, Asn-148, Tyr-214, Lys-218, and Thr-252 each contribute to the NADP(+) site. Residue Tyr-214 is the Proton acceptor of the active site. Lys-218 acts as the Lowers pKa of active site Tyr in catalysis.

Belongs to the short-chain dehydrogenases/reductases (SDR) family.

Its subcellular location is the mitochondrion membrane. Its function is as follows. Involved in the resistance to DNA-damaging agents. This is an uncharacterized protein from Saccharomyces cerevisiae (strain ATCC 204508 / S288c) (Baker's yeast).